The primary structure comprises 264 residues: Thymidylate synthase (264 aa).

A dUMP-binding site is contributed by Arg-21. Position 51 (His-51) interacts with (6R)-5,10-methylene-5,6,7,8-tetrahydrofolate. Arg-126–Arg-127 provides a ligand contact to dUMP. Residue Cys-146 is the Nucleophile of the active site. DUMP contacts are provided by residues Arg-166–Asp-169, Asn-177, and His-207–Tyr-209. Asp-169 serves as a coordination point for (6R)-5,10-methylene-5,6,7,8-tetrahydrofolate. Ser-263 lines the (6R)-5,10-methylene-5,6,7,8-tetrahydrofolate pocket.

The protein belongs to the thymidylate synthase family. Bacterial-type ThyA subfamily. As to quaternary structure, homodimer.

The protein resides in the cytoplasm. The enzyme catalyses dUMP + (6R)-5,10-methylene-5,6,7,8-tetrahydrofolate = 7,8-dihydrofolate + dTMP. The protein operates within pyrimidine metabolism; dTTP biosynthesis. In terms of biological role, catalyzes the reductive methylation of 2'-deoxyuridine-5'-monophosphate (dUMP) to 2'-deoxythymidine-5'-monophosphate (dTMP) while utilizing 5,10-methylenetetrahydrofolate (mTHF) as the methyl donor and reductant in the reaction, yielding dihydrofolate (DHF) as a by-product. This enzymatic reaction provides an intracellular de novo source of dTMP, an essential precursor for DNA biosynthesis. This is Thymidylate synthase from Halalkalibacterium halodurans (strain ATCC BAA-125 / DSM 18197 / FERM 7344 / JCM 9153 / C-125) (Bacillus halodurans).